The chain runs to 364 residues: Histidinol-phosphate aminotransferase BQ2027_MB2256C (364 aa).

An N6-(pyridoxal phosphate)lysine modification is found at Lys-220.

The protein belongs to the class-I pyridoxal-phosphate-dependent aminotransferase family. In terms of assembly, monomer. Pyridoxal 5'-phosphate serves as cofactor.

The protein localises to the secreted. The protein resides in the cell wall. It carries out the reaction L-histidinol phosphate + 2-oxoglutarate = 3-(imidazol-4-yl)-2-oxopropyl phosphate + L-glutamate. Its function is as follows. Aminotransferase that catalyzes the conversion of histidinol phosphate and 2-oxoglutarate into L-glutamate and imidazole acetol phosphate. Might play a significant role in mediating histidine biosynthesis during infection. Facilitates mycobacterial survival and virulence in macrophages. This chain is Histidinol-phosphate aminotransferase BQ2027_MB2256C, found in Mycobacterium bovis (strain ATCC BAA-935 / AF2122/97).